A 718-amino-acid polypeptide reads, in one-letter code: ATP-dependent RNA helicase homolog DQX1 (718 aa).

One can recognise a Helicase ATP-binding domain in the interval 54-222 (HLESSPTGVV…WGNSPIVRVP (169 aa)). Residue 67–74 (GDPGSGKS) participates in ATP binding. The DEAQ box motif lies at 167-170 (DEAQ). The Helicase C-terminal domain occupies 245–447 (ACQAVLELCQ…ALMRALEDLD (203 aa)). Positions 690–718 (QLREGTAEPPAAATETSSPQEYGDGCVLQ) are disordered. Over residues 696–708 (AEPPAAATETSSP) the composition is skewed to low complexity.

As to expression, ubiquitous.

The protein localises to the nucleus. In terms of biological role, might be involved in RNA metabolism; it is missing helicase motif III and may not have helicase activity. The chain is ATP-dependent RNA helicase homolog DQX1 (Dqx1) from Mus musculus (Mouse).